A 428-amino-acid polypeptide reads, in one-letter code: Serine--tRNA ligase (428 aa).

231-233 (TSE) is a binding site for L-serine. Residues 262-264 (RRE) and Val-278 contribute to the ATP site. Glu-285 contacts L-serine. An ATP-binding site is contributed by 349–352 (ELTS). Thr-384 provides a ligand contact to L-serine.

It belongs to the class-II aminoacyl-tRNA synthetase family. Type-1 seryl-tRNA synthetase subfamily. As to quaternary structure, homodimer. The tRNA molecule binds across the dimer.

It is found in the cytoplasm. It catalyses the reaction tRNA(Ser) + L-serine + ATP = L-seryl-tRNA(Ser) + AMP + diphosphate + H(+). The catalysed reaction is tRNA(Sec) + L-serine + ATP = L-seryl-tRNA(Sec) + AMP + diphosphate + H(+). The protein operates within aminoacyl-tRNA biosynthesis; selenocysteinyl-tRNA(Sec) biosynthesis; L-seryl-tRNA(Sec) from L-serine and tRNA(Sec): step 1/1. Catalyzes the attachment of serine to tRNA(Ser). Is also able to aminoacylate tRNA(Sec) with serine, to form the misacylated tRNA L-seryl-tRNA(Sec), which will be further converted into selenocysteinyl-tRNA(Sec). The sequence is that of Serine--tRNA ligase from Bifidobacterium animalis subsp. lactis (strain AD011).